A 216-amino-acid chain; its full sequence is [5-(aminomethyl)furan-3-yl]methyl phosphate kinase (216 aa).

ATP-binding positions include 5 to 9 (KIGGS), G39, D142, 147 to 152 (YDKFPG), and G166.

The protein belongs to the MfnE family. Homotrimer. The cofactor is Mg(2+).

The catalysed reaction is [5-(aminomethyl)-3-furyl]methyl phosphate + ATP = [5-(aminomethyl)furan-3-yl]methyl diphosphate + ADP. It functions in the pathway cofactor biosynthesis; methanofuran biosynthesis. Inhibited by EDTA. Functionally, catalyzes the formation of 5-(aminomethyl)-3-furanmethanol diphosphate (F1-PP) from 5-(aminomethyl)-3-furanmethanol phosphate (F1-P) and ATP. In vitro, can also act as an adenylate kinase that catalyzes the transfer of a phosphoryl group from ATP to AMP, generating two molecules of ADP. This chain is [5-(aminomethyl)furan-3-yl]methyl phosphate kinase, found in Methanocaldococcus jannaschii (strain ATCC 43067 / DSM 2661 / JAL-1 / JCM 10045 / NBRC 100440) (Methanococcus jannaschii).